The primary structure comprises 222 residues: Cytochrome b6 (222 aa).

Residues Ile-39–Phe-59 form a helical membrane-spanning segment. Cys-42 serves as a coordination point for heme c. Heme b-binding residues include His-93 and His-107. A run of 3 helical transmembrane segments spans residues Ala-97–Phe-117, Leu-123–Tyr-143, and Leu-193–Ile-213. Heme b contacts are provided by His-194 and His-209.

Belongs to the cytochrome b family. PetB subfamily. In terms of assembly, the 4 large subunits of the cytochrome b6-f complex are cytochrome b6, subunit IV (17 kDa polypeptide, PetD), cytochrome f and the Rieske protein, while the 4 small subunits are PetG, PetL, PetM and PetN. The complex functions as a dimer. Heme b is required as a cofactor. Requires heme c as cofactor.

The protein resides in the cellular thylakoid membrane. Functionally, component of the cytochrome b6-f complex, which mediates electron transfer between photosystem II (PSII) and photosystem I (PSI), cyclic electron flow around PSI, and state transitions. This chain is Cytochrome b6, found in Rippkaea orientalis (strain PCC 8801 / RF-1) (Cyanothece sp. (strain PCC 8801)).